A 239-amino-acid polypeptide reads, in one-letter code: Ribonuclease PH (239 aa).

Residues Arg-86 and 124-126 (GTR) contribute to the phosphate site.

The protein belongs to the RNase PH family. As to quaternary structure, homohexameric ring arranged as a trimer of dimers.

It catalyses the reaction tRNA(n+1) + phosphate = tRNA(n) + a ribonucleoside 5'-diphosphate. In terms of biological role, phosphorolytic 3'-5' exoribonuclease that plays an important role in tRNA 3'-end maturation. Removes nucleotide residues following the 3'-CCA terminus of tRNAs; can also add nucleotides to the ends of RNA molecules by using nucleoside diphosphates as substrates, but this may not be physiologically important. Probably plays a role in initiation of 16S rRNA degradation (leading to ribosome degradation) during starvation. The protein is Ribonuclease PH of Allorhizobium ampelinum (strain ATCC BAA-846 / DSM 112012 / S4) (Agrobacterium vitis (strain S4)).